We begin with the raw amino-acid sequence, 376 residues long: Lipoprotein p33 (376 aa).

The N-terminal stretch at 1–30 (MKIKKIKLLKALALTGAFGIVATVPVIVSS) is a signal peptide. Cys31 carries N-palmitoyl cysteine lipidation. The S-diacylglycerol cysteine moiety is linked to residue Cys31. The interval 33–59 (STDNNGGTGDNNTGGGGSGTDQQQGTT) is disordered. Positions 38-51 (GGTGDNNTGGGGSG) are enriched in gly residues.

This sequence belongs to the p35 lipoprotein family.

The protein resides in the cell membrane. The chain is Lipoprotein p33 from Malacoplasma penetrans (strain HF-2) (Mycoplasma penetrans).